The primary structure comprises 26 residues: Somatostatin-1 (26 aa).

Cysteines 15 and 26 form a disulfide.

Belongs to the somatostatin family.

The protein localises to the secreted. Somatostatin inhibits the release of somatotropin. This is Somatostatin-1 (sst1) from Amia calva (Bowfin).